The chain runs to 173 residues: Bacterial deubiquitinase-like protein BilC (173 aa).

Zn(2+) is bound by residues His-103, His-105, and Asp-115.

The protein belongs to the M67B family. It depends on Zn(2+) as a cofactor.

In terms of biological role, component of the Bil (bacterial ISG15-like) antiviral defense system, composed of BilA, BilB, BilC and BilD. The Bil system specifically conjugates a ubiquitin-like moiety (bilA) to the bacteriophage central tail fiber (CTF, or tip attachment protein J) via reactions involving E1 (bilD) and E2 (bilB). Modifies CTF of phage SECphi27 and SECphi4, which probably interferes with assembly of the phage tail. Also modifies T5 baseplate hub protein pb3 (gene D16), but not gp27 of phage T6 (Bil defends against T6). BilC is a probable metalloprotease that may cleave non-specifically conjugated targets. Bil-encoding bacteria produce mostly defective phage SECphi27, many of which have phage assembly defects, including no tails. SECphi27 phage progeny produced in E.coli with the Bil system inject less DNA into naive host cells, maybe because the phage are less able to adsorb and inject their DNA into host cells. Functionally, expression of the Bil system in E.coli (strain MG1655) confers about 100-fold resistance to phage SECphi27, SECphi18, SECphi6, SECphi4 and T5, but not to SECphi17. When cells expressing the Bil system are infected by phage SECphi27 at low multiplicity of infection (0.03 MOI) the culture survives, at 3.0 MOI the culture collapses at the same time as cells without the Bil system. Its function is as follows. Cleaves a ubiquitin-GFP (Ubl-GFP) fusion protein in vivo. The chain is Bacterial deubiquitinase-like protein BilC from Collimonas sp. (strain OK412).